Consider the following 323-residue polypeptide: Glutamyl-Q tRNA(Asp) synthetase (323 aa).

L-glutamate is bound by residues 5 to 9 (RFAPT) and E41. The 'HIGH' region signature appears at 8 to 18 (PTPSGALHLGN). C105, C107, Y129, and C133 together coordinate Zn(2+). Residues Y193 and R211 each contribute to the L-glutamate site. The 'KMSKS' region signature appears at 249–253 (RLAKR). Residue K252 participates in ATP binding.

It belongs to the class-I aminoacyl-tRNA synthetase family. GluQ subfamily. Requires Zn(2+) as cofactor.

Catalyzes the tRNA-independent activation of glutamate in presence of ATP and the subsequent transfer of glutamate onto a tRNA(Asp). Glutamate is transferred on the 2-amino-5-(4,5-dihydroxy-2-cyclopenten-1-yl) moiety of the queuosine in the wobble position of the QUC anticodon. This Symbiobacterium thermophilum (strain DSM 24528 / JCM 14929 / IAM 14863 / T) protein is Glutamyl-Q tRNA(Asp) synthetase.